We begin with the raw amino-acid sequence, 551 residues long: MSDIAITISLLALVAVIGLWIGHWKIRGVGLGIGGVLFGGIIVAHFTNQYGLKLDAHTLHFVQEFGLILFVYTIGIQVGPGFFSSLRKSGLKLNAFAILIIVLGSIAVVLVHKIADVPLDIALGIYSGAVTNTPALGAGQQILAELGVPQTTVTMGVSYAMAYPFGICGILLAMWLIRLFFNVKVDDEAARFNAESSQDKESLHNISLKVTNQNLDGLTLIQIPGFSDEEVVCSRLKRDDMEIVPKASTEIRTNDILQLVGDDNSLAKMRLIIGHEVDAPTVAYSGEIRSERVVVTNEKVLGKKIRALGIHQKYGVVISRLNRAGIELVPTGNTTLQFGDVLHMVGRSDVLNQAISVIGNAQQKLLQVQMLPVFIGIGLGVLVGSIPFYIPGFPVALKLGLAGGPLVVALILARIGTIGKLYWFMPPSANLALREIGIVLFLAVVGLKSGGSFFDTLVNGSGLEWMGYGIFITFVPLIIVGTIARLYGKLNYLTICGLLAGSMTDPPALAFANEIKEDNGAAALSYATVYPLVMFLRIMSPQLLAVLLWAA.

5 consecutive transmembrane segments (helical) span residues 4-24, 28-48, 65-85, 95-115, and 157-177; these read IAIT…IGHW, GVGL…HFTN, FGLI…FFSS, AFAI…HKIA, and VSYA…MWLI. RCK C-terminal domains are found at residues 191–275 and 277–360; these read RFNA…IIGH and VDAP…VIGN. 6 helical membrane passes run 370–390, 402–424, 438–458, 463–483, 492–512, and 529–549; these read MLPV…PFYI, AGGP…LYWF, IVLF…DTLV, LEWM…VGTI, YLTI…LAFA, and VYPL…VLLW.

It belongs to the AAE transporter (TC 2.A.81) family. YidE subfamily.

Its subcellular location is the cell membrane. This is Putative transport protein CGSHiGG_02670 from Haemophilus influenzae (strain PittGG).